A 222-amino-acid polypeptide reads, in one-letter code: Uracil-DNA glycosylase (222 aa).

Catalysis depends on aspartate 61, which acts as the Proton acceptor.

This sequence belongs to the uracil-DNA glycosylase (UDG) superfamily. UNG family.

The protein localises to the cytoplasm. It catalyses the reaction Hydrolyzes single-stranded DNA or mismatched double-stranded DNA and polynucleotides, releasing free uracil.. Its function is as follows. Excises uracil residues from the DNA which can arise as a result of misincorporation of dUMP residues by DNA polymerase or due to deamination of cytosine. This is Uracil-DNA glycosylase from Aeromonas hydrophila subsp. hydrophila (strain ATCC 7966 / DSM 30187 / BCRC 13018 / CCUG 14551 / JCM 1027 / KCTC 2358 / NCIMB 9240 / NCTC 8049).